The following is a 187-amino-acid chain: uncharacterized protein (187 aa).

Positions 1–25 are cleaved as a signal peptide; the sequence is MSKFVKTAIAAAMVMGAFTSTATIA.

The protein belongs to the fimbrial protein family.

Part of the yfcOPQRSUV fimbrial operon. Could contribute to adhesion to various surfaces in specific environmental niches. Increases adhesion to eukaryotic T24 bladder epithelial cells in the absence of fim genes. This is an uncharacterized protein from Escherichia coli (strain K12).